Reading from the N-terminus, the 314-residue chain is Probable phytol kinase 1, chloroplastic (314 aa).

The transit peptide at 1–62 (MAAAARPVDV…GVGAAAAPAV (62 aa)) directs the protein to the chloroplast. A run of 7 helical transmembrane segments spans residues 72–91 (AALR…YSLV), 111–131 (IVHV…SNST), 135–155 (FFAA…GLRL), 181–201 (YVIV…IGIV), 234–254 (IGSI…LFYF), 266–286 (LALG…CIPV), and 294–314 (ISVP…SSCC).

This sequence belongs to the polyprenol kinase family.

It localises to the plastid. The protein resides in the chloroplast membrane. The catalysed reaction is phytol + CTP = phytyl phosphate + CDP + H(+). It functions in the pathway cofactor biosynthesis; tocopherol biosynthesis. In terms of biological role, involved in the activation and reutilization of phytol from chlorophyll degradation in plant metabolism, including tocopherol biosynthesis. Catalyzes the conversion of phytol to phytol monophosphate (PMP). The protein is Probable phytol kinase 1, chloroplastic of Oryza sativa subsp. japonica (Rice).